The primary structure comprises 242 residues: ATP synthase subunit a (242 aa).

6 helical membrane-spanning segments follow: residues 29–49, 84–104, 114–134, 140–160, 181–201, and 203–223; these read SSIY…LAFY, FIPL…LGMT, IIVT…VGFV, FLTL…MIVI, MAGH…MIYL, and FLPI…AILQ.

The protein belongs to the ATPase A chain family. In terms of assembly, F-type ATPases have 2 components, CF(1) - the catalytic core - and CF(0) - the membrane proton channel. CF(1) has five subunits: alpha(3), beta(3), gamma(1), delta(1), epsilon(1). CF(0) has three main subunits: a(1), b(2) and c(9-12). The alpha and beta chains form an alternating ring which encloses part of the gamma chain. CF(1) is attached to CF(0) by a central stalk formed by the gamma and epsilon chains, while a peripheral stalk is formed by the delta and b chains.

Its subcellular location is the cell membrane. In terms of biological role, key component of the proton channel; it plays a direct role in the translocation of protons across the membrane. This is ATP synthase subunit a from Rickettsia africae (strain ESF-5).